The primary structure comprises 811 residues: MSMLLNLYRKALNLPLSLLVKTRSIPTDPVNELGLKLDQPIVYVLPYTSQTDLLILQKNCQALNLPDPLVNNDIQGVSLSRFVFLDEGRRFFKSKGAKSETELVFYRYLDLNRNDEQLDIQVVPVSVLWGRAPGKEKGLPVLRLLGTFQRLVTMLWFGRDNFIRFSQAVSLRYMITNHGTDENLAQKLARVAKMHFAKQRYSATGPQLPDRQAMFNKLLQSPAILAAIEDEAKKPKSSLEKARKEAEKILDEIAANVRHDSLRSADRVLSWLWNKLYQGINVQYAERVRKLALEGHELVYVPCHRSHMDYLLLSYILYHQGLVPPHIAAGINLNFWPAGPIFRSWGAFFIRRTFKGNRLYSTIFREYLAELFYRGYSVEYFIEGGRSRTGRLLDPKTGMMSMTLQALQRGLTRPISIVPVYIGYEHVLEVDTYAKELRGAEKEKENAGLVLRVIKKLKKLGQGYVNFGEPIPLNHYLNQYFPEWKEPLTDENGRPKWLNSAVEAVSKQVMVHINNAVAVNAKNLIGSVLLASRQRSLTREQLIEQVESYMQLFKNVPYTAEVTLPTDTAEAMLDHVINLPRSGVISEKDNFGEIIRLDRQSAVLMTYYRNNIQHLFVLPSLVASIVLHHETVSKDLIIQSVNRIYPFLQAELFMHFKAEEVRGHIEAILAEFVAQNLIKNESDMFVINRQRIRSLQLHSSGVRELLQRYYISLSILIEQPEISRNELEQESRSIAQRLSVLHGINAPEFFDKALFSTFSATLKEQGYFDEEGDTIVSKVQSTEELIRGLISVEIQHTVQGAMVKLEEVNNI.

The HXXXXD motif motif lies at 303-308 (CHRSHM).

It belongs to the GPAT/DAPAT family.

It localises to the cell inner membrane. The catalysed reaction is sn-glycerol 3-phosphate + an acyl-CoA = a 1-acyl-sn-glycero-3-phosphate + CoA. The protein operates within phospholipid metabolism; CDP-diacylglycerol biosynthesis; CDP-diacylglycerol from sn-glycerol 3-phosphate: step 1/3. The polypeptide is Glycerol-3-phosphate acyltransferase (Glaesserella parasuis serovar 5 (strain SH0165) (Haemophilus parasuis)).